The primary structure comprises 259 residues: Sorbitol-6-phosphate 2-dehydrogenase (259 aa).

4–33 (VAVVIGGGQTLGAFLCHGLAAEGYRVAVVD) lines the NAD(+) pocket. Residue Ser141 coordinates substrate. The active-site Proton acceptor is the Tyr154.

The protein belongs to the short-chain dehydrogenases/reductases (SDR) family. As to quaternary structure, homotetramer.

It carries out the reaction D-sorbitol 6-phosphate + NAD(+) = beta-D-fructose 6-phosphate + NADH + H(+). It functions in the pathway carbohydrate metabolism; D-sorbitol degradation; D-fructose 6-phosphate from D-sorbitol 6-phosphate: step 1/1. The polypeptide is Sorbitol-6-phosphate 2-dehydrogenase (srlD) (Escherichia coli (strain K12)).